Reading from the N-terminus, the 148-residue chain is UPF0178 protein lpp0103 (148 aa).

The protein belongs to the UPF0178 family.

The sequence is that of UPF0178 protein lpp0103 from Legionella pneumophila (strain Paris).